Here is a 157-residue protein sequence, read N- to C-terminus: SsrA-binding protein (157 aa).

Over residues Lys-136–Arg-151 the composition is skewed to basic and acidic residues. The interval Lys-136–Ser-157 is disordered.

The protein belongs to the SmpB family.

The protein resides in the cytoplasm. Its function is as follows. Required for rescue of stalled ribosomes mediated by trans-translation. Binds to transfer-messenger RNA (tmRNA), required for stable association of tmRNA with ribosomes. tmRNA and SmpB together mimic tRNA shape, replacing the anticodon stem-loop with SmpB. tmRNA is encoded by the ssrA gene; the 2 termini fold to resemble tRNA(Ala) and it encodes a 'tag peptide', a short internal open reading frame. During trans-translation Ala-aminoacylated tmRNA acts like a tRNA, entering the A-site of stalled ribosomes, displacing the stalled mRNA. The ribosome then switches to translate the ORF on the tmRNA; the nascent peptide is terminated with the 'tag peptide' encoded by the tmRNA and targeted for degradation. The ribosome is freed to recommence translation, which seems to be the essential function of trans-translation. The chain is SsrA-binding protein from Cereibacter sphaeroides (strain ATCC 17029 / ATH 2.4.9) (Rhodobacter sphaeroides).